Here is a 421-residue protein sequence, read N- to C-terminus: Testin (421 aa).

Positions 92–199 constitute a PET domain; sequence MILTNPVAAK…GDVKLPCEMD (108 aa). Residues 133-164 are disordered; it reads EKQPVAGSEGAQYRKKQLAKQLPAHDQDPSKC. The span at 155–164 shows a compositional bias: basic and acidic residues; that stretch reads PAHDQDPSKC. LIM zinc-binding domains follow at residues 234-297, 299-359, and 362-421; these read YSCY…CDSE, PRCA…NHAV, and QGCH…KRMS.

Belongs to the prickle / espinas / testin family. In terms of assembly, interacts via LIM domain 1 with ZYX. Interacts (via LIM domain 3) with ENAH and VASP. Interacts with ALKBH4, talin, actin, alpha-actinin, GRIP1 and PXN. Interacts (via LIM domain 2) with ACTL7A (via N-terminus). Heterodimer with ACTL7A; the heterodimer interacts with ENAH to form a heterotrimer.

Its subcellular location is the cytoplasm. The protein localises to the cell junction. The protein resides in the focal adhesion. Scaffold protein that may play a role in cell adhesion, cell spreading and in the reorganization of the actin cytoskeleton. Plays a role in the regulation of cell proliferation. May act as a tumor suppressor. This is Testin (TES) from Pan troglodytes (Chimpanzee).